The sequence spans 165 residues: Nucleotide-binding protein Syncc9605_0652 (165 aa).

This sequence belongs to the YajQ family.

In terms of biological role, nucleotide-binding protein. This is Nucleotide-binding protein Syncc9605_0652 from Synechococcus sp. (strain CC9605).